Here is a 494-residue protein sequence, read N- to C-terminus: Hexokinase-2 (494 aa).

The 452-residue stretch at 32–483 (GRADAVLREL…SGIGAALLAA (452 aa)) folds into the Hexokinase domain. A hexokinase small subdomain region spans residues 87 to 225 (SGEEKGVFYA…GLDMKVTALI (139 aa)). Positions 101, 102, and 103 each coordinate ADP. Thr-191, Lys-192, Asn-226, and Asp-227 together coordinate D-glucose. Residues 226 to 472 (NDTIGTLAGG…STIVIKLAKD (247 aa)) form a hexokinase large subdomain region. Thr-250 is a binding site for ADP. D-glucose contacts are provided by Asn-253, Glu-281, and Glu-312. Gly-437 contacts ADP.

This sequence belongs to the hexokinase family. As to expression, expressed in roots, leaves, flowers, immature seeds, endosperm and seed coat.

The catalysed reaction is a D-hexose + ATP = a D-hexose 6-phosphate + ADP + H(+). The enzyme catalyses D-fructose + ATP = D-fructose 6-phosphate + ADP + H(+). It carries out the reaction D-glucose + ATP = D-glucose 6-phosphate + ADP + H(+). It participates in carbohydrate metabolism; hexose metabolism. Its pathway is carbohydrate degradation; glycolysis; D-glyceraldehyde 3-phosphate and glycerone phosphate from D-glucose: step 1/4. In terms of biological role, fructose and glucose phosphorylating enzyme. This chain is Hexokinase-2 (HXK2), found in Oryza sativa subsp. japonica (Rice).